The following is a 384-amino-acid chain: Methylthioribose-1-phosphate isomerase (384 aa).

Residue Asp-255 is the Proton donor of the active site.

The protein belongs to the eIF-2B alpha/beta/delta subunits family. MtnA subfamily.

The protein localises to the cytoplasm. Its subcellular location is the nucleus. The catalysed reaction is 5-(methylsulfanyl)-alpha-D-ribose 1-phosphate = 5-(methylsulfanyl)-D-ribulose 1-phosphate. It participates in amino-acid biosynthesis; L-methionine biosynthesis via salvage pathway; L-methionine from S-methyl-5-thio-alpha-D-ribose 1-phosphate: step 1/6. In terms of biological role, catalyzes the interconversion of methylthioribose-1-phosphate (MTR-1-P) into methylthioribulose-1-phosphate (MTRu-1-P). The chain is Methylthioribose-1-phosphate isomerase (mri1) from Talaromyces stipitatus (strain ATCC 10500 / CBS 375.48 / QM 6759 / NRRL 1006) (Penicillium stipitatum).